Consider the following 148-residue polypeptide: UPF0260 protein YE2365 (148 aa).

This sequence belongs to the UPF0260 family.

The chain is UPF0260 protein YE2365 from Yersinia enterocolitica serotype O:8 / biotype 1B (strain NCTC 13174 / 8081).